We begin with the raw amino-acid sequence, 429 residues long: 4-hydroxy-3-methylbut-2-en-1-yl diphosphate synthase (flavodoxin) (429 aa).

Residues Cys-317, Cys-320, Cys-363, and Glu-370 each coordinate [4Fe-4S] cluster.

The protein belongs to the IspG family. The cofactor is [4Fe-4S] cluster.

The catalysed reaction is (2E)-4-hydroxy-3-methylbut-2-enyl diphosphate + oxidized [flavodoxin] + H2O + 2 H(+) = 2-C-methyl-D-erythritol 2,4-cyclic diphosphate + reduced [flavodoxin]. It functions in the pathway isoprenoid biosynthesis; isopentenyl diphosphate biosynthesis via DXP pathway; isopentenyl diphosphate from 1-deoxy-D-xylulose 5-phosphate: step 5/6. Its function is as follows. Converts 2C-methyl-D-erythritol 2,4-cyclodiphosphate (ME-2,4cPP) into 1-hydroxy-2-methyl-2-(E)-butenyl 4-diphosphate. In Deinococcus radiodurans (strain ATCC 13939 / DSM 20539 / JCM 16871 / CCUG 27074 / LMG 4051 / NBRC 15346 / NCIMB 9279 / VKM B-1422 / R1), this protein is 4-hydroxy-3-methylbut-2-en-1-yl diphosphate synthase (flavodoxin).